We begin with the raw amino-acid sequence, 132 residues long: UPF0329 protein ECU07_0050/ECU09_2020 (132 aa).

It belongs to the UPF0329 family.

This is UPF0329 protein ECU07_0050/ECU09_2020 from Encephalitozoon cuniculi (strain GB-M1) (Microsporidian parasite).